Here is a 180-residue protein sequence, read N- to C-terminus: Nucleoside triphosphate/diphosphate phosphatase (180 aa).

Catalysis depends on Arg-26, which acts as the Proton donor. Mg(2+)-binding residues include Asn-90, Asp-106, Asp-108, Asp-110, Asp-123, and Glu-126.

Belongs to the Ntdp family. Requires Mg(2+) as cofactor.

The catalysed reaction is a ribonucleoside 5'-triphosphate + H2O = a ribonucleoside 5'-diphosphate + phosphate + H(+). It catalyses the reaction a ribonucleoside 5'-diphosphate + H2O = a ribonucleoside 5'-phosphate + phosphate + H(+). Functionally, has nucleoside phosphatase activity towards nucleoside triphosphates and nucleoside diphosphates. This chain is Nucleoside triphosphate/diphosphate phosphatase, found in Staphylococcus epidermidis (strain ATCC 35984 / DSM 28319 / BCRC 17069 / CCUG 31568 / BM 3577 / RP62A).